The primary structure comprises 354 residues: Uroporphyrinogen decarboxylase (354 aa).

Residues 27 to 31, Asp77, Tyr154, Thr209, and His327 each bind substrate; that span reads RQAGR.

It belongs to the uroporphyrinogen decarboxylase family. In terms of assembly, homodimer.

It localises to the cytoplasm. It catalyses the reaction uroporphyrinogen III + 4 H(+) = coproporphyrinogen III + 4 CO2. It participates in porphyrin-containing compound metabolism; protoporphyrin-IX biosynthesis; coproporphyrinogen-III from 5-aminolevulinate: step 4/4. Functionally, catalyzes the decarboxylation of four acetate groups of uroporphyrinogen-III to yield coproporphyrinogen-III. The protein is Uroporphyrinogen decarboxylase of Sodalis glossinidius (strain morsitans).